The sequence spans 300 residues: Neutral protease NprE (300 aa).

Ca(2+) is bound at residue D139. H143 provides a ligand contact to Zn(2+). E144 is a catalytic residue. 2 residues coordinate Zn(2+): H147 and E167. Ca(2+) contacts are provided by D178, D181, D183, and E186. H228 acts as the Proton donor in catalysis.

Belongs to the peptidase M4 family. Ca(2+) serves as cofactor. The cofactor is Zn(2+).

Its subcellular location is the secreted. The enzyme catalyses Similar, but not identical, to that of thermolysin.. Extracellular zinc metalloprotease. The protein is Neutral protease NprE (nprE) of Bacillus pumilus (Bacillus mesentericus).